The chain runs to 60 residues: Large ribosomal subunit protein uL30 (60 aa).

It belongs to the universal ribosomal protein uL30 family. In terms of assembly, part of the 50S ribosomal subunit.

This chain is Large ribosomal subunit protein uL30, found in Flavobacterium psychrophilum (strain ATCC 49511 / DSM 21280 / CIP 103535 / JIP02/86).